The chain runs to 735 residues: DNA replication licensing factor mcm5 (735 aa).

Residues 332-538 (IYETVAKSIA…RDMTLAKHVM (207 aa)) enclose the MCM domain. R372 contacts ADP. Positions 513 to 516 (SRFD) match the Arginine finger motif.

This sequence belongs to the MCM family. Component of the mcm2-7 complex (RLF-M). The complex forms a toroidal hexameric ring with the proposed subunit order mcm2-mcm6-mcm4-mcm7-mcm3-mcm5. The heterodimer of mmcm3/mcm5 interacts with mcm4, mmcm6, mcm7 and weakly with mcm2. Component of the CMG helicase complex, composed of the mcm2-7 complex, the GINS complex and cdc45.

It is found in the nucleus. Its subcellular location is the chromosome. The catalysed reaction is ATP + H2O = ADP + phosphate + H(+). Its function is as follows. Acts as a component of the MCM2-7 complex (MCM complex) which is the replicative helicase essential for 'once per cell cycle' DNA replication initiation and elongation in eukaryotic cells. Core component of CDC45-MCM-GINS (CMG) helicase, the molecular machine that unwinds template DNA during replication, and around which the replisome is built. The active ATPase sites in the MCM2-7 ring are formed through the interaction surfaces of two neighboring subunits such that a critical structure of a conserved arginine finger motif is provided in trans relative to the ATP-binding site of the Walker A box of the adjacent subunit. The six ATPase active sites, however, are likely to contribute differentially to the complex helicase activity. This chain is DNA replication licensing factor mcm5, found in Xenopus tropicalis (Western clawed frog).